Here is a 361-residue protein sequence, read N- to C-terminus: 3-dehydroquinate synthase (361 aa).

NAD(+)-binding positions include 104 to 108 (GVIGD), 128 to 129 (TT), Lys-140, and Lys-149. Glu-182, His-245, and His-262 together coordinate Zn(2+).

Belongs to the sugar phosphate cyclases superfamily. Dehydroquinate synthase family. The cofactor is NAD(+). Co(2+) is required as a cofactor. It depends on Zn(2+) as a cofactor.

The protein resides in the cytoplasm. It catalyses the reaction 7-phospho-2-dehydro-3-deoxy-D-arabino-heptonate = 3-dehydroquinate + phosphate. It participates in metabolic intermediate biosynthesis; chorismate biosynthesis; chorismate from D-erythrose 4-phosphate and phosphoenolpyruvate: step 2/7. Functionally, catalyzes the conversion of 3-deoxy-D-arabino-heptulosonate 7-phosphate (DAHP) to dehydroquinate (DHQ). This is 3-dehydroquinate synthase from Halalkalibacterium halodurans (strain ATCC BAA-125 / DSM 18197 / FERM 7344 / JCM 9153 / C-125) (Bacillus halodurans).